Here is a 222-residue protein sequence, read N- to C-terminus: Ribosomal RNA large subunit methyltransferase E (222 aa).

The segment covering 1 to 13 (MSRSDKNPHERLK) has biased composition (basic and acidic residues). The interval 1 to 22 (MSRSDKNPHERLKTAKKRTASS) is disordered. Positions 75, 77, 94, 110, and 134 each coordinate S-adenosyl-L-methionine. The active-site Proton acceptor is Lys-174.

It belongs to the class I-like SAM-binding methyltransferase superfamily. RNA methyltransferase RlmE family.

It localises to the cytoplasm. The enzyme catalyses uridine(2552) in 23S rRNA + S-adenosyl-L-methionine = 2'-O-methyluridine(2552) in 23S rRNA + S-adenosyl-L-homocysteine + H(+). Functionally, specifically methylates the uridine in position 2552 of 23S rRNA at the 2'-O position of the ribose in the fully assembled 50S ribosomal subunit. This is Ribosomal RNA large subunit methyltransferase E from Novosphingobium aromaticivorans (strain ATCC 700278 / DSM 12444 / CCUG 56034 / CIP 105152 / NBRC 16084 / F199).